An 861-amino-acid polypeptide reads, in one-letter code: Leucine--tRNA ligase (861 aa).

A 'HIGH' region motif is present at residues 42-52; the sequence is PYPSGKLHMGH. The short motif at 618–622 is the 'KMSKS' region element; it reads KMSKS. Residue lysine 621 participates in ATP binding.

This sequence belongs to the class-I aminoacyl-tRNA synthetase family.

The protein resides in the cytoplasm. It carries out the reaction tRNA(Leu) + L-leucine + ATP = L-leucyl-tRNA(Leu) + AMP + diphosphate. The protein is Leucine--tRNA ligase of Buchnera aphidicola subsp. Baizongia pistaciae (strain Bp).